Reading from the N-terminus, the 155-residue chain is Transcription antitermination protein NusB (155 aa).

Belongs to the NusB family.

Functionally, involved in transcription antitermination. Required for transcription of ribosomal RNA (rRNA) genes. Binds specifically to the boxA antiterminator sequence of the ribosomal RNA (rrn) operons. The chain is Transcription antitermination protein NusB from Aliivibrio fischeri (strain ATCC 700601 / ES114) (Vibrio fischeri).